The sequence spans 621 residues: uncharacterized protein (621 aa).

5 positions are modified to phosphoserine: Ser-269, Ser-271, Ser-274, Ser-290, and Ser-292. LRR repeat units lie at residues 333-354 (QLLY…VFLS), 357-379 (SLVS…GELP), 380-401 (QLCS…YHIS), 404-425 (HLQI…ENVP), 426-447 (SLEK…RRLV), and 451-472 (NFEE…YRIT). Residues 552-581 (SKNASGGDTSSNVSLLNGSASEEIPQNTES) are disordered.

Its subcellular location is the cytoplasm. The protein localises to the nucleus. It localises to the vacuole membrane. This is an uncharacterized protein from Schizosaccharomyces pombe (strain 972 / ATCC 24843) (Fission yeast).